We begin with the raw amino-acid sequence, 350 residues long: Twinfilin-1 (350 aa).

Ser-2 carries the post-translational modification N-acetylserine. Residues 2–139 (SHQTGIQASE…SLHGYRKYLL (138 aa)) form the ADF-H 1 domain. 2 positions are modified to phosphoserine: Ser-143 and Ser-277. The ADF-H 2 domain occupies 175 to 313 (LQGVAFPISR…TADFLYDEVH (139 aa)). Tyr-309 carries the phosphotyrosine modification. Positions 316 to 350 (QHAHKQSFAKPKGPAGKRGIRRLIRGPAEAEATTD) are disordered. Thr-349 is modified (phosphothreonine).

This sequence belongs to the actin-binding proteins ADF family. Twinfilin subfamily. As to quaternary structure, interacts with G-actin; ADP-actin form and capping protein (CP). May also be able to interact with TWF2 and phosphoinositides, PI(4,5)P2. When bound to PI(4,5)P2, it is down-regulated. Interacts with ACTG1. Post-translationally, phosphorylated on serine and threonine residues.

The protein resides in the cytoplasm. The protein localises to the cytoskeleton. Actin-binding protein involved in motile and morphological processes. Inhibits actin polymerization, likely by sequestering G-actin. By capping the barbed ends of filaments, it also regulates motility. Seems to play an important role in clathrin-mediated endocytosis and distribution of endocytic organelles. The polypeptide is Twinfilin-1 (Twf1) (Rattus norvegicus (Rat)).